The chain runs to 200 residues: Dephospho-CoA kinase (200 aa).

The 197-residue stretch at valine 4–aspartate 200 folds into the DPCK domain. Residue alanine 12–threonine 17 coordinates ATP.

Belongs to the CoaE family.

Its subcellular location is the cytoplasm. The enzyme catalyses 3'-dephospho-CoA + ATP = ADP + CoA + H(+). It functions in the pathway cofactor biosynthesis; coenzyme A biosynthesis; CoA from (R)-pantothenate: step 5/5. Functionally, catalyzes the phosphorylation of the 3'-hydroxyl group of dephosphocoenzyme A to form coenzyme A. This is Dephospho-CoA kinase from Bacillus cereus (strain ATCC 14579 / DSM 31 / CCUG 7414 / JCM 2152 / NBRC 15305 / NCIMB 9373 / NCTC 2599 / NRRL B-3711).